A 332-amino-acid polypeptide reads, in one-letter code: L-lactate dehydrogenase A chain (332 aa).

NAD(+)-binding positions include 29–57 (GAVGMACAISILMKDLADELALVDVMEDK) and R99. Substrate is bound by residues R106, N138, and R169. N138 is a binding site for NAD(+). The Proton acceptor role is filled by H193. Position 248 (T248) interacts with substrate.

Belongs to the LDH/MDH superfamily. LDH family. Homotetramer.

The protein resides in the cytoplasm. The enzyme catalyses (S)-lactate + NAD(+) = pyruvate + NADH + H(+). It functions in the pathway fermentation; pyruvate fermentation to lactate; (S)-lactate from pyruvate: step 1/1. In terms of biological role, interconverts simultaneously and stereospecifically pyruvate and lactate with concomitant interconversion of NADH and NAD(+). In Sceloporus undulatus (Eastern fence lizard), this protein is L-lactate dehydrogenase A chain (LDHA).